Reading from the N-terminus, the 151-residue chain is 3-hydroxyacyl-[acyl-carrier-protein] dehydratase FabZ (151 aa).

The active site involves H58.

This sequence belongs to the thioester dehydratase family. FabZ subfamily.

It localises to the cytoplasm. It catalyses the reaction a (3R)-hydroxyacyl-[ACP] = a (2E)-enoyl-[ACP] + H2O. Its function is as follows. Involved in unsaturated fatty acids biosynthesis. Catalyzes the dehydration of short chain beta-hydroxyacyl-ACPs and long chain saturated and unsaturated beta-hydroxyacyl-ACPs. In Histophilus somni (strain 129Pt) (Haemophilus somnus), this protein is 3-hydroxyacyl-[acyl-carrier-protein] dehydratase FabZ.